Consider the following 320-residue polypeptide: Cytochrome f (320 aa).

The first 35 residues, 1–35 (MENRKTFSWLKEQMIRSISVSIMIYVITRTSISNA), serve as a signal peptide directing secretion. 4 residues coordinate heme: Tyr36, Cys56, Cys59, and His60. The chain crosses the membrane as a helical span at residues 286 to 305 (VQGLLFFFASVILAQVFLVL).

It belongs to the cytochrome f family. The 4 large subunits of the cytochrome b6-f complex are cytochrome b6, subunit IV (17 kDa polypeptide, petD), cytochrome f and the Rieske protein, while the 4 small subunits are PetG, PetL, PetM and PetN. The complex functions as a dimer. Heme serves as cofactor.

The protein localises to the plastid. It is found in the chloroplast thylakoid membrane. Functionally, component of the cytochrome b6-f complex, which mediates electron transfer between photosystem II (PSII) and photosystem I (PSI), cyclic electron flow around PSI, and state transitions. This is Cytochrome f (petA) from Zea mays (Maize).